The sequence spans 270 residues: MSMQTAPIKKTTLNHLQAKKNQEKIIAITAYDALFAQIFDPLVDVILVGDSLNMSFFNQNDTLSASVEMMLYHTKAVCAGAKTPFIITDMPFGSYKDEKTALKNAIRVYKETQASAIKLEGGKEKAKLVKTLTDEGVIVVGHIGLMPQFVRLDGGYKIKGKNEEQQKKLLEDALSLEEAGVGLLVLEGITTPIAQKITQKIKIPTIGIGSGKDCDGQILVWSDMLGFFDSFKPKFVREYLKGKELVQNAIKQYADDVKKGNFPNELESYH.

Mg(2+) contacts are provided by D50 and D89. 3-methyl-2-oxobutanoate contacts are provided by residues 50 to 51 (DS), D89, and K118. A Mg(2+)-binding site is contributed by E120. E187 acts as the Proton acceptor in catalysis.

Belongs to the PanB family. As to quaternary structure, homodecamer; pentamer of dimers. Mg(2+) serves as cofactor.

The protein localises to the cytoplasm. It catalyses the reaction 3-methyl-2-oxobutanoate + (6R)-5,10-methylene-5,6,7,8-tetrahydrofolate + H2O = 2-dehydropantoate + (6S)-5,6,7,8-tetrahydrofolate. It functions in the pathway cofactor biosynthesis; (R)-pantothenate biosynthesis; (R)-pantoate from 3-methyl-2-oxobutanoate: step 1/2. Its function is as follows. Catalyzes the reversible reaction in which hydroxymethyl group from 5,10-methylenetetrahydrofolate is transferred onto alpha-ketoisovalerate to form ketopantoate. The sequence is that of 3-methyl-2-oxobutanoate hydroxymethyltransferase from Helicobacter pylori (strain P12).